A 330-amino-acid polypeptide reads, in one-letter code: Diacylglycerol acyltransferase/mycolyltransferase Ag85B (330 aa).

Residues 1 to 40 form the signal peptide; the sequence is MTDLSEKVRAWGRRLLVGAAAAVTLPGLIGLAGGAATANA. Residue 82–83 participates in substrate binding; sequence LR. The fibronectin-binding stretch occupies residues 98-108; that stretch reads FEWYYQSGLSV. An intrachain disulfide couples cysteine 127 to cysteine 132. Positions 166 and 194 each coordinate substrate. Serine 166 functions as the Nucleophile in the catalytic mechanism. Glutamate 270 is a catalytic residue. Residues 272–275, lysine 279, and 302–304 each bind substrate; these read FVRS and HSW. Histidine 302 is a catalytic residue.

This sequence belongs to the mycobacterial A85 antigen family.

The protein resides in the secreted. The catalysed reaction is 2 alpha,alpha'-trehalose 6-mycolate = alpha,alpha'-trehalose 6,6'-bismycolate + alpha,alpha-trehalose. It catalyses the reaction an acyl-CoA + a 1,2-diacyl-sn-glycerol = a triacyl-sn-glycerol + CoA. In terms of biological role, the antigen 85 proteins (FbpA, FbpB, FbpC) are responsible for the high affinity of mycobacteria for fibronectin, a large adhesive glycoprotein, which facilitates the attachment of M.tuberculosis to murine alveolar macrophages (AMs). They also help to maintain the integrity of the cell wall by catalyzing the transfer of mycolic acids to cell wall arabinogalactan and through the synthesis of alpha,alpha-trehalose dimycolate (TDM, cord factor). They catalyze the transfer of a mycoloyl residue from one molecule of alpha,alpha-trehalose monomycolate (TMM) to another TMM, leading to the formation of TDM. This Mycobacterium avium protein is Diacylglycerol acyltransferase/mycolyltransferase Ag85B (fbpB).